Here is a 94-residue protein sequence, read N- to C-terminus: Pyrimidine/purine nucleoside phosphorylase (94 aa).

Belongs to the nucleoside phosphorylase PpnP family.

It catalyses the reaction a purine D-ribonucleoside + phosphate = a purine nucleobase + alpha-D-ribose 1-phosphate. The enzyme catalyses adenosine + phosphate = alpha-D-ribose 1-phosphate + adenine. The catalysed reaction is cytidine + phosphate = cytosine + alpha-D-ribose 1-phosphate. It carries out the reaction guanosine + phosphate = alpha-D-ribose 1-phosphate + guanine. It catalyses the reaction inosine + phosphate = alpha-D-ribose 1-phosphate + hypoxanthine. The enzyme catalyses thymidine + phosphate = 2-deoxy-alpha-D-ribose 1-phosphate + thymine. The catalysed reaction is uridine + phosphate = alpha-D-ribose 1-phosphate + uracil. It carries out the reaction xanthosine + phosphate = alpha-D-ribose 1-phosphate + xanthine. Its function is as follows. Catalyzes the phosphorolysis of diverse nucleosides, yielding D-ribose 1-phosphate and the respective free bases. Can use uridine, adenosine, guanosine, cytidine, thymidine, inosine and xanthosine as substrates. Also catalyzes the reverse reactions. The polypeptide is Pyrimidine/purine nucleoside phosphorylase (Escherichia fergusonii (strain ATCC 35469 / DSM 13698 / CCUG 18766 / IAM 14443 / JCM 21226 / LMG 7866 / NBRC 102419 / NCTC 12128 / CDC 0568-73)).